The following is a 573-amino-acid chain: Sulfate adenylyltransferase (573 aa).

The interval 1–169 (MSNPPHGGVL…LEAVNKLQHY (169 aa)) is N-terminal. Residues 170 to 394 (DFVDLRYSPA…LRESHPPRSQ (225 aa)) form a catalytic region. Residue glutamine 197 coordinates sulfate. ATP is bound by residues 197–200 (QTRN) and 291–294 (GRDH). Active-site residues include threonine 198, arginine 199, and asparagine 200. Position 199 (arginine 199) interacts with sulfate. Alanine 295 provides a ligand contact to sulfate. Methionine 333 contacts ATP. The tract at residues 395-573 (QGFTVLFTGY…LESQGLLDRF (179 aa)) is allosteric regulation domain; adenylyl-sulfate kinase-like. 3'-phosphoadenylyl sulfate-binding positions include 434-437 (ENIR), arginine 451, 477-478 (IA), and arginine 515.

This sequence in the N-terminal section; belongs to the sulfate adenylyltransferase family. It in the C-terminal section; belongs to the APS kinase family. As to quaternary structure, homohexamer. Dimer of trimers.

Its subcellular location is the cytoplasm. It carries out the reaction sulfate + ATP + H(+) = adenosine 5'-phosphosulfate + diphosphate. Its pathway is sulfur metabolism; hydrogen sulfide biosynthesis; sulfite from sulfate: step 1/3. With respect to regulation, allosterically inhibited by 3'-phosphoadenosine 5'-phosphosulfate (PAPS). Functionally, catalyzes the first intracellular reaction of sulfate assimilation, forming adenosine-5'-phosphosulfate (APS) from inorganic sulfate and ATP. Plays an important role in sulfate activation as a component of the biosynthesis pathway of sulfur-containing amino acids. This is Sulfate adenylyltransferase (cys-11) from Neurospora crassa (strain ATCC 24698 / 74-OR23-1A / CBS 708.71 / DSM 1257 / FGSC 987).